The primary structure comprises 297 residues: Rhomboid-type serine protease 2 (297 aa).

6 consecutive transmembrane segments (helical) span residues 14–34 (IQHPPALSLGLPIFLTVIFLL), 60–80 (ISFYPLVHATWFHLLLNLVAL), 98–118 (IVLNILAVVTAIPWCLLSIGF), 120–140 (PDEAVLGSSAWIFSFMGYWAI), 155–175 (LVVPTWLLPIIYLVVIAIVIP), and 179–199 (FIGHLLGLIAGWMMALGYLDV). Ser128 acts as the Nucleophile in catalysis. His182 is a catalytic residue. The segment at 268–297 (DLEAGTRSRGNSSVDPTTSFPGTGQTLGTQ) is disordered. Over residues 275–297 (SRGNSSVDPTTSFPGTGQTLGTQ) the composition is skewed to polar residues.

Belongs to the peptidase S54 family.

It localises to the golgi apparatus membrane. It is found in the golgi apparatus. Its subcellular location is the cis-Golgi network membrane. It carries out the reaction Cleaves type-1 transmembrane domains using a catalytic dyad composed of serine and histidine that are contributed by different transmembrane domains.. Probable rhomboid-type serine protease that catalyzes intramembrane proteolysis. The protein is Rhomboid-type serine protease 2 (RBD2) of Yarrowia lipolytica (strain CLIB 122 / E 150) (Yeast).